Reading from the N-terminus, the 203-residue chain is Cutinase pbc1 (203 aa).

The N-terminal stretch at 1-18 is a signal peptide; the sequence is MKVTALGNTLTGFGQALA. An intrachain disulfide couples Cys-32 to Cys-107. The active-site Nucleophile is Ser-118. Cys-166 and Cys-173 are joined by a disulfide. His-170 is a catalytic residue. Catalysis depends on His-183, which acts as the Proton donor/acceptor.

The protein belongs to the cutinase family. The 2 disulfide bonds play a critical role in holding the catalytic residues in juxta-position; reduction of the disulfide bridges results in the complete inactivation of the enzyme.

The protein localises to the secreted. The enzyme catalyses cutin + H2O = cutin monomers.. Catalyzes the hydrolysis of complex carboxylic polyesters found in the cell wall of plants. Degrades cutin, a macromolecule that forms the structure of the plant cuticle. Allows pathogenic fungi to penetrate through the cuticular barrier into the host plant during the initial stage of fungal infection. The polypeptide is Cutinase pbc1 (Pyrenopeziza brassicae).